We begin with the raw amino-acid sequence, 300 residues long: 33 kDa chaperonin (300 aa).

2 disulfide bridges follow: Cys-235–Cys-237 and Cys-269–Cys-272.

This sequence belongs to the HSP33 family. In terms of processing, under oxidizing conditions two disulfide bonds are formed involving the reactive cysteines. Under reducing conditions zinc is bound to the reactive cysteines and the protein is inactive.

It is found in the cytoplasm. In terms of biological role, redox regulated molecular chaperone. Protects both thermally unfolding and oxidatively damaged proteins from irreversible aggregation. Plays an important role in the bacterial defense system toward oxidative stress. The chain is 33 kDa chaperonin from Pseudomonas syringae pv. syringae (strain B728a).